Here is a 206-residue protein sequence, read N- to C-terminus: MKLSLIFILAYLIGSFPSGVIIGRVFCHKDPRDAGSHNIGTTNSYRVLGPIAGTAVLFLDILKGTLAASLPMIFHTSNHSLVLVVGLAAVIGHAYSIFLRFTGGKAVATSAGILLAYNPLFFVIASTIFISVILITSMVSMASIIGPLLIAILSFYTHDWLLGTIATLVLIFLTYRHRENISRIKNGTENLVPFGLYYRYKQKKRQ.

5 helical membrane passes run 3–23, 47–67, 79–99, 119–139, and 152–172; these read LSLIFILAYLIGSFPSGVIIG, VLGPIAGTAVLFLDILKGTLA, HSLVLVVGLAAVIGHAYSIFL, PLFFVIASTIFISVILITSMV, and ILSFYTHDWLLGTIATLVLIF.

It belongs to the PlsY family. Probably interacts with PlsX.

It localises to the cell membrane. It carries out the reaction an acyl phosphate + sn-glycerol 3-phosphate = a 1-acyl-sn-glycero-3-phosphate + phosphate. It participates in lipid metabolism; phospholipid metabolism. Catalyzes the transfer of an acyl group from acyl-phosphate (acyl-PO(4)) to glycerol-3-phosphate (G3P) to form lysophosphatidic acid (LPA). This enzyme utilizes acyl-phosphate as fatty acyl donor, but not acyl-CoA or acyl-ACP. This is Glycerol-3-phosphate acyltransferase from Latilactobacillus sakei subsp. sakei (strain 23K) (Lactobacillus sakei subsp. sakei).